Here is a 235-residue protein sequence, read N- to C-terminus: Phosphoribosylformylglycinamidine synthase subunit PurQ (235 aa).

The Glutamine amidotransferase type-1 domain occupies 5–235; it reads FGVVVFPGSN…LLNHVSIVAA (231 aa). C88 serves as the catalytic Nucleophile. Active-site residues include H205 and E207.

Part of the FGAM synthase complex composed of 1 PurL, 1 PurQ and 2 PurS subunits.

It localises to the cytoplasm. It catalyses the reaction N(2)-formyl-N(1)-(5-phospho-beta-D-ribosyl)glycinamide + L-glutamine + ATP + H2O = 2-formamido-N(1)-(5-O-phospho-beta-D-ribosyl)acetamidine + L-glutamate + ADP + phosphate + H(+). It carries out the reaction L-glutamine + H2O = L-glutamate + NH4(+). The protein operates within purine metabolism; IMP biosynthesis via de novo pathway; 5-amino-1-(5-phospho-D-ribosyl)imidazole from N(2)-formyl-N(1)-(5-phospho-D-ribosyl)glycinamide: step 1/2. In terms of biological role, part of the phosphoribosylformylglycinamidine synthase complex involved in the purines biosynthetic pathway. Catalyzes the ATP-dependent conversion of formylglycinamide ribonucleotide (FGAR) and glutamine to yield formylglycinamidine ribonucleotide (FGAM) and glutamate. The FGAM synthase complex is composed of three subunits. PurQ produces an ammonia molecule by converting glutamine to glutamate. PurL transfers the ammonia molecule to FGAR to form FGAM in an ATP-dependent manner. PurS interacts with PurQ and PurL and is thought to assist in the transfer of the ammonia molecule from PurQ to PurL. The polypeptide is Phosphoribosylformylglycinamidine synthase subunit PurQ (Salinibacter ruber (strain DSM 13855 / M31)).